The following is a 779-amino-acid chain: Transcriptional regulator QRICH1 (779 aa).

Met-1 bears the N-acetylmethionine mark. A CARD domain is found at 6 to 48 (ENTISFEEYIRVKARSVPQHRMKEFLDSLASKGPEALQEFQQT). Disordered regions lie at residues 141–163 (QGQAAQPAAPSIQTPSLQSPSPS) and 219–242 (ALSPPPSQQGSPREGERRVGTASV). The residue at position 346 (Ser-346) is a Phosphoserine. Glycyl lysine isopeptide (Lys-Gly) (interchain with G-Cter in SUMO2) cross-links involve residues Lys-354 and Lys-359. Residues 420–430 (QQQPQQQTPQE) show a composition bias toward low complexity. The segment at 420 to 443 (QQQPQQQTPQEQTPPPPQQQQQQQ) is disordered. Ser-467 bears the Phosphoserine mark.

It is found in the nucleus. It localises to the cytoplasm. Its subcellular location is the cell membrane. Functionally, transcriptional regulator that acts as a mediator of the integrated stress response (ISR) through transcriptional control of protein homeostasis under conditions of ER stress. Controls the outcome of the unfolded protein response (UPR), an ER-stress response pathway that either promotes recovery of ER homeostasis and cell survival, or triggers the terminal UPR which elicits programmed cell death when ER stress is prolonged and unresolved. ER stress induces QRICH1 translation by a ribosome translation re-initiation mechanism in response to EIF2S1/eIF-2-alpha phosphorylation, and stress-induced QRICH1 regulates a transcriptional program associated with protein translation, protein secretion-mediated proteotoxicity and cell death during the terminal UPR. May cooperate with ATF4 transcription factor signaling to regulate ER homeostasis which is critical for cell viability. Up-regulates CASP3/caspase-3 activity in epithelial cells under ER stress. Central regulator of proteotoxicity associated with ER stress-mediated inflammatory diseases in the intestines and liver. Involved in chondrocyte hypertrophy, a process required for normal longitudinal bone growth. The chain is Transcriptional regulator QRICH1 (QRICH1) from Bos taurus (Bovine).